A 194-amino-acid polypeptide reads, in one-letter code: Interferon alpha (194 aa).

Residues 1–23 (MALPSSFLVALVALGCNSVCSLG) form the signal peptide. 2 disulfide bridges follow: cysteine 24–cysteine 123 and cysteine 52–cysteine 166. The N-linked (GlcNAc...) asparagine glycan is linked to asparagine 102.

Belongs to the alpha/beta interferon family.

The protein resides in the secreted. Functionally, produced by macrophages, IFN-alpha have antiviral activities. Interferon stimulates the production of two enzymes: a protein kinase and an oligoadenylate synthetase. The polypeptide is Interferon alpha (Felis catus (Cat)).